The following is a 148-amino-acid chain: Single-stranded DNA-binding protein, mitochondrial (148 aa).

Residues 1–16 (MFRRPALQVLRQFVRH) constitute a mitochondrion transit peptide. Residues 30–141 (LNRVQLLGRV…IIADNIVFLS (112 aa)) form the SSB domain. Phosphoserine occurs at positions 67 and 79. Lysine 113 is modified (N6-acetyllysine). Lysine 122 carries the post-translational modification N6-succinyllysine.

As to quaternary structure, homotetramer. Interacts with MPG/AAG, through inhibition of its glycosylase activity it potentially prevents formation of DNA breaks in ssDNA, ensuring that base removal primarily occurs in dsDNA. Interacts with POLDIP2. Interacts with PRIMPOL.

The protein localises to the mitochondrion. Its subcellular location is the mitochondrion matrix. It is found in the mitochondrion nucleoid. In terms of biological role, binds preferentially and cooperatively to pyrimidine rich single-stranded DNA (ss-DNA). In vitro, required to maintain the copy number of mitochondrial DNA (mtDNA) and plays a crucial role during mtDNA replication by stimulating the activity of the replisome components POLG and TWNK at the replication fork. Promotes the activity of the gamma complex polymerase POLG, largely by organizing the template DNA and eliminating secondary structures to favor ss-DNA conformations that facilitate POLG activity. In addition it is able to promote the 5'-3' unwinding activity of the mtDNA helicase TWNK. May also function in mtDNA repair. In Oryctolagus cuniculus (Rabbit), this protein is Single-stranded DNA-binding protein, mitochondrial (SSBP1).